Consider the following 115-residue polypeptide: Parathyroid hormone (115 aa).

Residues methionine 1–glycine 25 form the signal peptide. The propeptide occupies lysine 26–arginine 31. The important for receptor binding stretch occupies residues arginine 51–glycine 69.

This sequence belongs to the parathyroid hormone family. Interacts with PTH1R (via N-terminal extracellular domain). As to expression, highly expressed in the parathyroid gland. Also expressed in the placenta, thymus and testis.

Its subcellular location is the secreted. Functionally, parathyroid hormone elevates calcium level by dissolving the salts in bone and preventing their renal excretion. Acts by binding to its receptor, PTH1R, activating G protein-coupled receptor signaling. Stimulates [1-14C]-2-deoxy-D-glucose (2DG) transport and glycogen synthesis in osteoblastic cells. The sequence is that of Parathyroid hormone from Mus musculus (Mouse).